Here is a 477-residue protein sequence, read N- to C-terminus: Tyrosine-protein kinase transforming protein Fes (477 aa).

Residues 49 to 76 (GEPPPVLLLQDDRHSTSSSEQEREGGRT) form a disordered region. A compositionally biased stretch (basic and acidic residues) spans 58–74 (QDDRHSTSSSEQEREGG). Positions 115–204 (WYHGALPRAE…KSGIVLNRAV (90 aa)) constitute an SH2 domain. Positions 216-477 (LVLGEQIGRG…ELQSIRKRHR (262 aa)) constitute a Protein kinase domain. ATP-binding positions include 222–230 (IGRGNFGEV) and Lys-245. The active-site Proton acceptor is the Asp-338. Position 368 is a phosphotyrosine; by autocatalysis (Tyr-368).

This sequence belongs to the protein kinase superfamily. Tyr protein kinase family. Fes/fps subfamily.

It catalyses the reaction L-tyrosyl-[protein] + ATP = O-phospho-L-tyrosyl-[protein] + ADP + H(+). This Feline sarcoma virus (strain Snyder-Theilen) protein is Tyrosine-protein kinase transforming protein Fes (V-FES).